The chain runs to 636 residues: Chaperone protein DnaK (636 aa).

Phosphothreonine; by autocatalysis is present on T198. Residues 602–636 (QAEGAQPGGEAAGEASAKDEKVVDADFEEVKDDKK) are disordered. The segment covering 626 to 636 (ADFEEVKDDKK) has biased composition (acidic residues).

The protein belongs to the heat shock protein 70 family.

Acts as a chaperone. The protein is Chaperone protein DnaK of Geobacter sulfurreducens (strain ATCC 51573 / DSM 12127 / PCA).